The following is a 429-amino-acid chain: Divergent protein kinase domain 2A (429 aa).

The N-terminal stretch at 1–34 (MLRLASLKFGRLFRYAKVLFAASLLVVMLLNTHS) is a signal peptide.

It belongs to the DIPK family.

Its subcellular location is the cytoplasmic vesicle. The protein localises to the COPI-coated vesicle. It is found in the golgi apparatus. It localises to the secreted. May play a role in cardiomyocyte proliferation through paracrine signaling and activation of the PPI3K-AKT-CDK7 signaling cascade. This Xenopus tropicalis (Western clawed frog) protein is Divergent protein kinase domain 2A (dipk2a).